A 160-amino-acid polypeptide reads, in one-letter code: Globin CTT-II beta (160 aa).

The N-terminal stretch at 1-15 is a signal peptide; sequence MKFLVLALCIAAAVA. A Globin domain is found at 17–160; sequence PLSADEASLV…NVFNMMFSYL (144 aa). Heme b contacts are provided by His75 and His110.

The protein belongs to the globin family. As to quaternary structure, homodimer.

This chain is Globin CTT-II beta, found in Chironomus thummi thummi (Midge).